Here is a 601-residue protein sequence, read N- to C-terminus: Tubulin polyglutamylase ttll-4 (601 aa).

Residues 1–18 are compositionally biased toward polar residues; the sequence is MSSGYSSAPSVSHTSSDT. A disordered region spans residues 1–37; the sequence is MSSGYSSAPSVSHTSSDTDLNRIDSYDDGAEETTDEQ. The TTL domain maps to 138-476; it reads QARLTWCHNS…YVPPSFDKLS (339 aa). ATP-binding positions include lysine 254, 260 to 261, 282 to 285, and 295 to 297; these read RG, QHYI, and KFD. Residue arginine 260 coordinates a protein. L-glutamate is bound at residue arginine 321. Residue 342-343 participates in ATP binding; sequence TN. Positions 344, 345, and 362 each coordinate L-glutamate. 3 residues coordinate Mg(2+): aspartate 422, glutamate 435, and asparagine 437. Residue lysine 453 participates in L-glutamate binding.

It belongs to the tubulin--tyrosine ligase family. It depends on Mg(2+) as a cofactor. Expressed in many sensory neurons in amphid.

It carries out the reaction L-glutamyl-[protein] + L-glutamate + ATP = gamma-L-glutamyl-L-glutamyl-[protein] + ADP + phosphate + H(+). Its function is as follows. Monoglutamylase which modifies tubulin, adding a single glutamate on the gamma-carboxyl group of specific glutamate residues of target proteins. Involved in the side-chain initiation step of the polyglutamylation reaction but not in the elongation step. Preferentially modifies beta-tail tubulin over the alpha-tubulin. Involved in side-chain glutamylation of tubulin in sensory cilia. Together with ttll-5 and ttll-11, required for male mating. The chain is Tubulin polyglutamylase ttll-4 from Caenorhabditis elegans.